Reading from the N-terminus, the 98-residue chain is Prostate and testis expressed protein 3 (98 aa).

Residues 1–20 form the signal peptide; sequence MNKHFLLLFSLFYFIVEATS. Residues 21–97 enclose the UPAR/Ly6 domain; that stretch reads LKCVTCHLRT…CCNSDFCNFR (77 aa). Disulfide bonds link cysteine 23-cysteine 50, cysteine 26-cysteine 35, cysteine 42-cysteine 68, and cysteine 72-cysteine 88.

It belongs to the PATE family.

The protein localises to the secreted. This Mus musculus (Mouse) protein is Prostate and testis expressed protein 3 (Pate3).